Here is a 365-residue protein sequence, read N- to C-terminus: Myb/SANT-like DNA-binding domain-containing protein 3 (365 aa).

Residues F13–K78 form the Myb-like domain. The stretch at Q301 to K337 forms a coiled coil.

It belongs to the MSANTD3 family.

This Xenopus tropicalis (Western clawed frog) protein is Myb/SANT-like DNA-binding domain-containing protein 3 (msantd3).